We begin with the raw amino-acid sequence, 105 residues long: Probable non-functional immunoglobulin lambda variable 5-48 (105 aa).

The signal sequence occupies residues 1–19; sequence MAWTPLLLLFLSHCTGSLS. The tract at residues 20–44 is framework-1; the sequence is QAVLTQPTSLSASPGASARLTCTLR. One can recognise an Ig-like domain in the interval 20 to 105; that stretch reads QAVLTQPTSL…NAGILFISGL (86 aa). Residues 45-53 form a complementarity-determining-1 region; it reads SGISVGSYR. Positions 54–70 are framework-2; it reads IYWYQQKPGSPPRYLLN. A complementarity-determining-2 region spans residues 71–77; it reads YYSDSDK. The framework-3 stretch occupies residues 78 to 105; sequence HQGSGVPSRFSGSKDASTNAGILFISGL.

As to quaternary structure, immunoglobulins are composed of two identical heavy chains and two identical light chains; disulfide-linked.

It is found in the secreted. Its subcellular location is the cell membrane. Its function is as follows. Probable non-functional open reading frame (ORF) of V region of the variable domain of immunoglobulin light chains. Non-functional ORF generally cannot participate in the synthesis of a productive immunoglobulin chain due to altered V-(D)-J or switch recombination and/or splicing site (at mRNA level) and/or conserved amino acid change (protein level). Immunoglobulins, also known as antibodies, are membrane-bound or secreted glycoproteins produced by B lymphocytes. In the recognition phase of humoral immunity, the membrane-bound immunoglobulins serve as receptors which, upon binding of a specific antigen, trigger the clonal expansion and differentiation of B lymphocytes into immunoglobulins-secreting plasma cells. Secreted immunoglobulins mediate the effector phase of humoral immunity, which results in the elimination of bound antigens. The antigen binding site is formed by the variable domain of one heavy chain, together with that of its associated light chain. Thus, each immunoglobulin has two antigen binding sites with remarkable affinity for a particular antigen. The variable domains are assembled by a process called V-(D)-J rearrangement and can then be subjected to somatic hypermutations which, after exposure to antigen and selection, allow affinity maturation for a particular antigen. The protein is Probable non-functional immunoglobulin lambda variable 5-48 of Homo sapiens (Human).